A 247-amino-acid polypeptide reads, in one-letter code: 6-carboxyhexanoate--CoA ligase (247 aa).

The protein belongs to the BioW family. In terms of assembly, homodimer. Requires Mg(2+) as cofactor.

It catalyses the reaction heptanedioate + ATP + CoA = 6-carboxyhexanoyl-CoA + AMP + diphosphate. It functions in the pathway metabolic intermediate metabolism; pimeloyl-CoA biosynthesis; pimeloyl-CoA from pimelate: step 1/1. Its function is as follows. Catalyzes the transformation of pimelate into pimeloyl-CoA with concomitant hydrolysis of ATP to AMP. This chain is 6-carboxyhexanoate--CoA ligase, found in Persephonella marina (strain DSM 14350 / EX-H1).